The following is a 141-amino-acid chain: Nucleoside diphosphate kinase (141 aa).

ATP contacts are provided by Lys-11, Phe-59, Arg-87, Thr-93, Arg-104, and Asn-114. His-117 functions as the Pros-phosphohistidine intermediate in the catalytic mechanism.

It belongs to the NDK family. In terms of assembly, homotetramer. Mg(2+) is required as a cofactor.

The protein resides in the cytoplasm. It catalyses the reaction a 2'-deoxyribonucleoside 5'-diphosphate + ATP = a 2'-deoxyribonucleoside 5'-triphosphate + ADP. It carries out the reaction a ribonucleoside 5'-diphosphate + ATP = a ribonucleoside 5'-triphosphate + ADP. In terms of biological role, major role in the synthesis of nucleoside triphosphates other than ATP. The ATP gamma phosphate is transferred to the NDP beta phosphate via a ping-pong mechanism, using a phosphorylated active-site intermediate. This is Nucleoside diphosphate kinase from Verminephrobacter eiseniae (strain EF01-2).